The primary structure comprises 361 residues: Putative pumilio homolog 22 (361 aa).

The PUM-HD domain maps to 5–348 (RGYDLASQVL…NIVAIIDSET (344 aa)). Pumilio repeat units lie at residues 27-63 (HITYRHLLVLSSDDNGCVILKKVITIADDFLKDEFLD) and 64-103 (LIAQHAHSLSMHDLGISLIQHVLELDFTKKTTQDDKRLHE). Residues 104–131 (LMAEFDEVLSTSVTADVDKLHKLASKLM) form a Pumilio 3; degenerate repeat. A Pumilio 4 repeat occupies 132 to 167 (LDSDLFFEFVITRRGSLMIQIILGKSEEVDQVILAG). A Pumilio 5; degenerate repeat occupies 168-205 (VKQRFIDVTTNFYGYRIMIQTIKVFKKRGDLKVYDQIL). One copy of the Pumilio 6; degenerate repeat lies at 206-243 (RLIGVHALYLTKDPDMGNKTFQHAINLHHQDCTTFIAC). Pumilio repeat units lie at residues 244-284 (GLQS…EIVK) and 285-319 (CDEDTLVRLATDEYGNNILKKFLALAKEHKEDFFG).

It localises to the cytoplasm. Sequence-specific RNA-binding protein that regulates translation and mRNA stability by binding the 3'-UTR of target mRNAs. The polypeptide is Putative pumilio homolog 22 (APUM22) (Arabidopsis thaliana (Mouse-ear cress)).